The primary structure comprises 276 residues: MHFHFSKMHGLGNDFMVVDCITQNVFFSQDLIRRLADRHTGVGFDQLLVVEAPYDPETDFHYRIFNADGSEVEQCGNGARCFARFVRLKGLTNRYSISVSTKKGKMILDVEDDGEVTVNMGVPEFEPNKIPFKAKQKEKTYIMRAGDKTLFCGAVSMGNPHVVTVVDDVDTAEVETLGPLLESHERFPERVNAGFMQVVNRNHIRLRVYERGAGETQACGSGACGAVAVGILQGLLDENVKVSLPGGDLRISWQGPGKPLFMTGPATHVFDGQLSC.

N13, Q46, and N66 together coordinate substrate. Catalysis depends on C75, which acts as the Proton donor. Substrate-binding positions include 76–77 (GN), N159, N192, and 210–211 (ER). The active-site Proton acceptor is C219. 220-221 (GS) serves as a coordination point for substrate.

The protein belongs to the diaminopimelate epimerase family. As to quaternary structure, homodimer.

It is found in the cytoplasm. The enzyme catalyses (2S,6S)-2,6-diaminopimelate = meso-2,6-diaminopimelate. The protein operates within amino-acid biosynthesis; L-lysine biosynthesis via DAP pathway; DL-2,6-diaminopimelate from LL-2,6-diaminopimelate: step 1/1. Catalyzes the stereoinversion of LL-2,6-diaminopimelate (L,L-DAP) to meso-diaminopimelate (meso-DAP), a precursor of L-lysine and an essential component of the bacterial peptidoglycan. The sequence is that of Diaminopimelate epimerase from Vibrio campbellii (strain ATCC BAA-1116).